Reading from the N-terminus, the 188-residue chain is Elongation factor P (188 aa).

This sequence belongs to the elongation factor P family.

The protein localises to the cytoplasm. It participates in protein biosynthesis; polypeptide chain elongation. In terms of biological role, involved in peptide bond synthesis. Stimulates efficient translation and peptide-bond synthesis on native or reconstituted 70S ribosomes in vitro. Probably functions indirectly by altering the affinity of the ribosome for aminoacyl-tRNA, thus increasing their reactivity as acceptors for peptidyl transferase. The polypeptide is Elongation factor P (Chlorobaculum tepidum (strain ATCC 49652 / DSM 12025 / NBRC 103806 / TLS) (Chlorobium tepidum)).